The chain runs to 341 residues: Methionine import ATP-binding protein MetN 2 (341 aa).

Residues 2–241 (IKLNQIVKRY…PQHEVTKRFV (240 aa)) form the ABC transporter domain. 38–45 (GFSGAGKS) lines the ATP pocket.

This sequence belongs to the ABC transporter superfamily. Methionine importer (TC 3.A.1.24) family. The complex is composed of two ATP-binding proteins (MetN), two transmembrane proteins (MetI) and a solute-binding protein (MetQ).

The protein resides in the cell membrane. The catalysed reaction is L-methionine(out) + ATP + H2O = L-methionine(in) + ADP + phosphate + H(+). It catalyses the reaction D-methionine(out) + ATP + H2O = D-methionine(in) + ADP + phosphate + H(+). Its function is as follows. Part of the ABC transporter complex MetNIQ involved in methionine import. Responsible for energy coupling to the transport system. The sequence is that of Methionine import ATP-binding protein MetN 2 from Staphylococcus epidermidis (strain ATCC 35984 / DSM 28319 / BCRC 17069 / CCUG 31568 / BM 3577 / RP62A).